We begin with the raw amino-acid sequence, 127 residues long: Fluoride-specific ion channel FluC 1 (127 aa).

Helical transmembrane passes span 3–23 (LLIVAIGGGIGAIARYLVGQW), 35–55 (IAMLVVNLLGSFGLGAFFGLY), 74–94 (IGFFGAFTTYSTFSVEAVLLI), and 102–122 (LFSYVLLSIVGSIAAFLLGFY). Na(+) is bound by residues Gly78 and Thr81.

This sequence belongs to the fluoride channel Fluc/FEX (TC 1.A.43) family.

It localises to the cell membrane. The enzyme catalyses fluoride(in) = fluoride(out). With respect to regulation, na(+) is not transported, but it plays an essential structural role and its presence is essential for fluoride channel function. Fluoride-specific ion channel. Important for reducing fluoride concentration in the cell, thus reducing its toxicity. In Halalkalibacterium halodurans (strain ATCC BAA-125 / DSM 18197 / FERM 7344 / JCM 9153 / C-125) (Bacillus halodurans), this protein is Fluoride-specific ion channel FluC 1.